The following is a 379-amino-acid chain: Multicilin (379 aa).

2 disordered regions span residues 26–46 and 87–106; these read SRRSLGKPGKPERKFVPPWKS and LLGTEAPPSGDSPASQNPSL. Residues 175–223 are a coiled coil; the sequence is EQYWKEVADQNQRALGTALIENNQLHVTLTQKQEEIASLRERNVQLKEL. The segment covering 289-309 has biased composition (basic and acidic residues); that stretch reads LQNRDPKRPRLQQEPDSKDCS. The tract at residues 289–311 is disordered; it reads LQNRDPKRPRLQQEPDSKDCSTR.

Belongs to the geminin family. Heterodimer (via coiled-coil domain) with GMNN (via coiled-coil domain); targets GMNN to the nucleus. Can form homodimers (in vitro, via coiled-coil domain), but these are much less stable than the heterodimer formed with GMNN.

The protein localises to the nucleus. In terms of biological role, transcription regulator specifically required for multiciliate cell differentiation. Acts in a multiprotein complex containing E2F4 and E2F5 that binds and activates genes required for centriole biogenesis. Required for the deuterosome-mediated acentriolar pathway. Plays a role in mitotic cell cycle progression by promoting cell cycle exit. Modulates GMNN activity by reducing its affinity for CDT1. In Rattus norvegicus (Rat), this protein is Multicilin (Mcidas).